The chain runs to 451 residues: Signal recognition particle protein (451 aa).

GTP contacts are provided by residues 107 to 114, 190 to 194, and 248 to 251; these read GLQGSGKT, DTAGR, and TKTD.

It belongs to the GTP-binding SRP family. SRP54 subfamily. Part of the signal recognition particle protein translocation system, which is composed of SRP and FtsY. SRP is a ribonucleoprotein composed of Ffh and a 4.5S RNA molecule.

The protein localises to the cytoplasm. It carries out the reaction GTP + H2O = GDP + phosphate + H(+). Functionally, involved in targeting and insertion of nascent membrane proteins into the cytoplasmic membrane. Binds to the hydrophobic signal sequence of the ribosome-nascent chain (RNC) as it emerges from the ribosomes. The SRP-RNC complex is then targeted to the cytoplasmic membrane where it interacts with the SRP receptor FtsY. Interaction with FtsY leads to the transfer of the RNC complex to the Sec translocase for insertion into the membrane, the hydrolysis of GTP by both Ffh and FtsY, and the dissociation of the SRP-FtsY complex into the individual components. The chain is Signal recognition particle protein from Buchnera aphidicola subsp. Acyrthosiphon pisum (strain APS) (Acyrthosiphon pisum symbiotic bacterium).